A 379-amino-acid polypeptide reads, in one-letter code: Alanine racemase (379 aa).

Residue Lys-37 is the Proton acceptor; specific for D-alanine of the active site. The residue at position 37 (Lys-37) is an N6-(pyridoxal phosphate)lysine. Arg-137 lines the substrate pocket. Catalysis depends on Tyr-269, which acts as the Proton acceptor; specific for L-alanine. Met-317 provides a ligand contact to substrate.

It belongs to the alanine racemase family. Pyridoxal 5'-phosphate serves as cofactor.

It catalyses the reaction L-alanine = D-alanine. It functions in the pathway amino-acid biosynthesis; D-alanine biosynthesis; D-alanine from L-alanine: step 1/1. In terms of biological role, catalyzes the interconversion of L-alanine and D-alanine. May also act on other amino acids. This is Alanine racemase (alr) from Geobacter sp. (strain M21).